We begin with the raw amino-acid sequence, 282 residues long: Pantothenate synthetase (282 aa).

30–37 provides a ligand contact to ATP; it reads MGYLHEGH. The active-site Proton donor is the H37. Residue Q61 coordinates (R)-pantoate. Q61 serves as a coordination point for beta-alanine. 147-150 is an ATP binding site; that stretch reads GMKD. (R)-pantoate is bound at residue Q153. Residues V176 and 184–187 each bind ATP; that span reads KSSR.

Belongs to the pantothenate synthetase family. As to quaternary structure, homodimer.

The protein resides in the cytoplasm. The enzyme catalyses (R)-pantoate + beta-alanine + ATP = (R)-pantothenate + AMP + diphosphate + H(+). It participates in cofactor biosynthesis; (R)-pantothenate biosynthesis; (R)-pantothenate from (R)-pantoate and beta-alanine: step 1/1. In terms of biological role, catalyzes the condensation of pantoate with beta-alanine in an ATP-dependent reaction via a pantoyl-adenylate intermediate. The polypeptide is Pantothenate synthetase (Bacillus cereus (strain G9842)).